Consider the following 76-residue polypeptide: Cytochrome c oxidase subunit 6C-1 (76 aa).

The Mitochondrial matrix portion of the chain corresponds to 2–10; the sequence is SLAKPAMRG. Residues 11 to 51 form a helical membrane-spanning segment; that stretch reads LLGKRLRFHLPIAFTLSLVAALGFKYGVTEPRKQAYADFYK. At 52–76 the chain is on the mitochondrial intermembrane side; it reads QYDAVKDFNAMREAGIFESVRPSGE.

The protein belongs to the cytochrome c oxidase subunit 6c family. As to quaternary structure, component of the cytochrome c oxidase (complex IV, CIV), a multisubunit enzyme composed of 14 subunits. The complex is composed of a catalytic core of 3 subunits MT-CO1, MT-CO2 and MT-CO3, encoded in the mitochondrial DNA, and 11 supernumerary subunits COX4I, COX5A, COX5B, COX6A, COX6B, COX6C, COX7A, COX7B, COX7C, COX8 and NDUFA4, which are encoded in the nuclear genome. The complex exists as a monomer or a dimer and forms supercomplexes (SCs) in the inner mitochondrial membrane with NADH-ubiquinone oxidoreductase (complex I, CI) and ubiquinol-cytochrome c oxidoreductase (cytochrome b-c1 complex, complex III, CIII), resulting in different assemblies (supercomplex SCI(1)III(2)IV(1) and megacomplex MCI(2)III(2)IV(2)).

The protein resides in the mitochondrion inner membrane. It participates in energy metabolism; oxidative phosphorylation. Component of the cytochrome c oxidase, the last enzyme in the mitochondrial electron transport chain which drives oxidative phosphorylation. The respiratory chain contains 3 multisubunit complexes succinate dehydrogenase (complex II, CII), ubiquinol-cytochrome c oxidoreductase (cytochrome b-c1 complex, complex III, CIII) and cytochrome c oxidase (complex IV, CIV), that cooperate to transfer electrons derived from NADH and succinate to molecular oxygen, creating an electrochemical gradient over the inner membrane that drives transmembrane transport and the ATP synthase. Cytochrome c oxidase is the component of the respiratory chain that catalyzes the reduction of oxygen to water. Electrons originating from reduced cytochrome c in the intermembrane space (IMS) are transferred via the dinuclear copper A center (CU(A)) of subunit 2 and heme A of subunit 1 to the active site in subunit 1, a binuclear center (BNC) formed by heme A3 and copper B (CU(B)). The BNC reduces molecular oxygen to 2 water molecules using 4 electrons from cytochrome c in the IMS and 4 protons from the mitochondrial matrix. In Thunnus obesus (Bigeye tuna), this protein is Cytochrome c oxidase subunit 6C-1.